A 577-amino-acid polypeptide reads, in one-letter code: Arginine--tRNA ligase (577 aa).

Positions Pro122–His132 match the 'HIGH' region motif.

It belongs to the class-I aminoacyl-tRNA synthetase family. Monomer.

Its subcellular location is the cytoplasm. The enzyme catalyses tRNA(Arg) + L-arginine + ATP = L-arginyl-tRNA(Arg) + AMP + diphosphate. This Vibrio campbellii (strain ATCC BAA-1116) protein is Arginine--tRNA ligase.